A 304-amino-acid chain; its full sequence is Homoserine O-succinyltransferase (304 aa).

Residue cysteine 142 is the Acyl-thioester intermediate of the active site. Residues lysine 163 and serine 192 each coordinate substrate. The Proton acceptor role is filled by histidine 235. Glutamate 237 is a catalytic residue. Arginine 249 lines the substrate pocket.

It belongs to the MetA family.

The protein localises to the cytoplasm. It catalyses the reaction L-homoserine + succinyl-CoA = O-succinyl-L-homoserine + CoA. It functions in the pathway amino-acid biosynthesis; L-methionine biosynthesis via de novo pathway; O-succinyl-L-homoserine from L-homoserine: step 1/1. Transfers a succinyl group from succinyl-CoA to L-homoserine, forming succinyl-L-homoserine. The chain is Homoserine O-succinyltransferase from Blochmanniella pennsylvanica (strain BPEN).